A 315-amino-acid chain; its full sequence is L-lactate dehydrogenase (315 aa).

NAD(+) contacts are provided by residues V17, D38, K43, Y69, and 83–84; that span reads GA. Substrate-binding residues include Q86 and R92. NAD(+) is bound by residues S105, 122 to 124, and S147; that span reads ATN. 124–127 lines the substrate pocket; that stretch reads NPVD. 152–155 provides a ligand contact to substrate; sequence DTAR. Residues R157 and H172 each coordinate beta-D-fructose 1,6-bisphosphate. H179 acts as the Proton acceptor in catalysis. Residue Y223 is modified to Phosphotyrosine. T232 is a substrate binding site.

It belongs to the LDH/MDH superfamily. LDH family. In terms of assembly, homotetramer.

The protein localises to the cytoplasm. The enzyme catalyses (S)-lactate + NAD(+) = pyruvate + NADH + H(+). It functions in the pathway fermentation; pyruvate fermentation to lactate; (S)-lactate from pyruvate: step 1/1. Its activity is regulated as follows. Allosterically activated by fructose 1,6-bisphosphate (FBP). Its function is as follows. Catalyzes the conversion of lactate to pyruvate. This Macrococcus caseolyticus (strain JCSC5402) (Macrococcoides caseolyticum) protein is L-lactate dehydrogenase.